Here is an 895-residue protein sequence, read N- to C-terminus: Probable inorganic carbon transporter subunit DabA 1 (895 aa).

4 residues coordinate Zn(2+): cysteine 398, aspartate 400, histidine 581, and cysteine 596.

The protein belongs to the inorganic carbon transporter (TC 9.A.2) DabA family. In terms of assembly, forms a complex with DabB. Zn(2+) serves as cofactor.

It is found in the cell inner membrane. In terms of biological role, part of an energy-coupled inorganic carbon pump. This is Probable inorganic carbon transporter subunit DabA 1 from Rhodopirellula baltica (strain DSM 10527 / NCIMB 13988 / SH1).